Reading from the N-terminus, the 476-residue chain is MLAPDTFWLACLEYFENELSAQQFNTWIKPLRLQLSDDSPEPALRLIAPNRFVLQWVKDNFLSDITQMAENHFARPVQLQLELAGQIPASASPSTGRNNGTASHSITAVFDAPTESAQKAPKDTKDTKDAKEKQEKNPTRLNPSFTFNTFVTGKANQLARAGAIQVAERPGVAYNPFFIYGGVGLGKTHLIQAIGNFVVEQNPAAKVRYIHSEQYVSDVVRAYQHKAFDEFKRYYHSLDLLLIDDIQFFGGKNRTQEEFFYAFNALIEAHKQVIITCDSYPKEIAGMEERLISRFGWGLTVAVEPPELEMRVAILLKKALMEDIILDESVAFFIAKHIRSNVRELEGALKRVVAYSRFTGHALTLDLAREALKDLLAVQNRQISIENIQKTVADYYKIKVAEMYSKKRSRVVARPRQMAMAISKELTPLSLPDIGEAFGGRDHTTVLHGYRKIAELRASDPAVNRDFNTLLHILRG.

The segment at 1 to 75 is domain I, interacts with DnaA modulators; that stretch reads MLAPDTFWLA…TQMAENHFAR (75 aa). The interval 75-139 is domain II; the sequence is RPVQLQLELA…AKEKQEKNPT (65 aa). Residues 110 to 141 form a disordered region; it reads FDAPTESAQKAPKDTKDTKDAKEKQEKNPTRL. Positions 120–138 are enriched in basic and acidic residues; the sequence is APKDTKDTKDAKEKQEKNP. The interval 140–356 is domain III, AAA+ region; that stretch reads RLNPSFTFNT…GALKRVVAYS (217 aa). 4 residues coordinate ATP: glycine 184, glycine 186, lysine 187, and threonine 188. A domain IV, binds dsDNA region spans residues 357–476; the sequence is RFTGHALTLD…FNTLLHILRG (120 aa).

The protein belongs to the DnaA family. As to quaternary structure, oligomerizes as a right-handed, spiral filament on DNA at oriC.

It localises to the cytoplasm. Functionally, plays an essential role in the initiation and regulation of chromosomal replication. ATP-DnaA binds to the origin of replication (oriC) to initiate formation of the DNA replication initiation complex once per cell cycle. Binds the DnaA box (a 9 base pair repeat at the origin) and separates the double-stranded (ds)DNA. Forms a right-handed helical filament on oriC DNA; dsDNA binds to the exterior of the filament while single-stranded (ss)DNA is stabiized in the filament's interior. The ATP-DnaA-oriC complex binds and stabilizes one strand of the AT-rich DNA unwinding element (DUE), permitting loading of DNA polymerase. After initiation quickly degrades to an ADP-DnaA complex that is not apt for DNA replication. Binds acidic phospholipids. This Nitrosospira multiformis (strain ATCC 25196 / NCIMB 11849 / C 71) protein is Chromosomal replication initiator protein DnaA.